Here is a 291-residue protein sequence, read N- to C-terminus: uncharacterized protein (291 aa).

3 disordered regions span residues 1-62 (MELR…SSKK), 220-242 (PLPASRPSLNLSPQKVPTGTDKV), and 255-291 (ENNKPHPRMRRRSDNPATNEYVRVFHLEKKEPKSRKK). Positions 18–41 (EPAKNKSERSIESNERVGTREAKS) are enriched in basic and acidic residues. Composition is skewed to polar residues over residues 42–58 (ENTSVFSPAYSDTATTD) and 226–236 (PSLNLSPQKVP). A Phosphoserine modification is found at serine 267.

It is found in the cytoplasm. Its subcellular location is the nucleus. This is an uncharacterized protein from Saccharomyces cerevisiae (strain ATCC 204508 / S288c) (Baker's yeast).